Consider the following 23-residue polypeptide: Caerin-4.3 (23 aa).

Expressed by the skin parotoid and/or rostral glands.

The protein localises to the secreted. Antibacterial peptide, that adopts an alpha helical conformation which can disrupt bacterial membranes. Each caerin displays a different antimicrobial specificity. This is Caerin-4.3 from Ranoidea caerulea (Green tree frog).